The chain runs to 216 residues: Gamma-glutamylcyclotransferase 2-1 (216 aa).

5-10 (VFGYGS) contacts substrate. Glu-87 serves as the catalytic Proton acceptor.

The protein belongs to the gamma-glutamylcyclotransferase family. The cofactor is Mn(2+). In terms of tissue distribution, expressed in the central vascular bundle of roots, leaf veins, hydathodes, cauline leaves, shoot apex, sepal veins, flower receptacles and developing seeds.

It is found in the cytoplasm. The enzyme catalyses an alpha-(gamma-L-glutamyl)-L-amino acid = 5-oxo-L-proline + an L-alpha-amino acid. Catalyzes the formation of 5-oxoproline from gamma-glutamyl dipeptides and plays a significant role in glutathione (GSH) homeostasis. Converts both GSH and gamma-glutamyl-L-alanine to 5-oxoproline in vitro. Plays a role in detoxification of heavy metals and metalloids by recycling glutamate and maintaining GSH homeostasis. In Arabidopsis thaliana (Mouse-ear cress), this protein is Gamma-glutamylcyclotransferase 2-1.